Here is a 67-residue protein sequence, read N- to C-terminus: UPF0337 protein Atu4724 (67 aa).

The protein belongs to the UPF0337 (CsbD) family.

The chain is UPF0337 protein Atu4724 from Agrobacterium fabrum (strain C58 / ATCC 33970) (Agrobacterium tumefaciens (strain C58)).